A 374-amino-acid polypeptide reads, in one-letter code: SH2 domain-containing protein 2A (374 aa).

One can recognise an SH2 domain in the interval 116–207 (WFHGFITRRE…PYGEILTQPL (92 aa)). A disordered region spans residues 213-232 (EPAGLSLRADSDSGSKRQDP). Positions 221–232 (ADSDSGSKRQDP) are enriched in basic and acidic residues. Residue serine 237 is modified to Phosphoserine. The disordered stretch occupies residues 241-301 (QQGQAQASGH…QAPPINPIYQ (61 aa)). Positions 256–266 (ASQQKATSQAS) are enriched in polar residues. Residues 267–273 (RPRPPIP) carry the SH3-binding motif. The span at 268-279 (PRPPIPAKPQLP) shows a compositional bias: pro residues. Serine 316 is subject to Phosphoserine. 2 disordered regions span residues 321–340 (PSNIYAEVEGPSGTAPIGHP) and 353–374 (GQVREVQGKISSRSRAERGSPS).

In terms of assembly, interacts with KDR. Interacts with p56-LCK, TXK and ITK. In terms of processing, phosphorylated on tyrosine residues upon TCR-stimulation. As to expression, expression limited to tissues of the immune system and, in particular, activated T-cells and natural killer cells. Expressed in the thymus, lymph node, and to a lesser extent, in the spleen and bone marrow. According to PubMed:10553045, also expressed in the lung.

The protein resides in the cytoplasm. Its subcellular location is the cell membrane. In terms of biological role, could be a T-cell-specific adapter protein involved in the control of T-cell activation. May play a role in p56-LCK-mediated T-cell signaling. Could be involved in the regulation of responses to T-cell activation stimuli, specifically proliferation and lymphokine production. Interactions with ITK and TXK may provide important biochemical links of these two important kinases with other components in the T-cell activation machinery. This Mus musculus (Mouse) protein is SH2 domain-containing protein 2A (Sh2d2a).